A 234-amino-acid polypeptide reads, in one-letter code: Uridylate kinase (234 aa).

9–10 (GS) lines the ATP pocket. G43 provides a ligand contact to UMP. Residues G44 and R48 each contribute to the ATP site. UMP is bound by residues D65 and 113–119 (VIPGQTT). Residues T139, Y145, and D148 each contribute to the ATP site.

Belongs to the UMP kinase family. As to quaternary structure, homohexamer.

Its subcellular location is the cytoplasm. It catalyses the reaction UMP + ATP = UDP + ADP. Its pathway is pyrimidine metabolism; CTP biosynthesis via de novo pathway; UDP from UMP (UMPK route): step 1/1. Inhibited by UTP. Its function is as follows. Catalyzes the reversible phosphorylation of UMP to UDP. This Methanococcoides burtonii (strain DSM 6242 / NBRC 107633 / OCM 468 / ACE-M) protein is Uridylate kinase.